The following is a 122-amino-acid chain: Small ribosomal subunit protein uS13 (122 aa).

The disordered stretch occupies residues 95-122 (GLPVHGQRTHTNARTRKGPRRGAVGKKK).

This sequence belongs to the universal ribosomal protein uS13 family. In terms of assembly, part of the 30S ribosomal subunit. Forms a loose heterodimer with protein S19. Forms two bridges to the 50S subunit in the 70S ribosome.

Functionally, located at the top of the head of the 30S subunit, it contacts several helices of the 16S rRNA. In the 70S ribosome it contacts the 23S rRNA (bridge B1a) and protein L5 of the 50S subunit (bridge B1b), connecting the 2 subunits; these bridges are implicated in subunit movement. Contacts the tRNAs in the A and P-sites. This is Small ribosomal subunit protein uS13 from Nitratidesulfovibrio vulgaris (strain DSM 19637 / Miyazaki F) (Desulfovibrio vulgaris).